A 251-amino-acid polypeptide reads, in one-letter code: Hydroxyacylglutathione hydrolase (251 aa).

The Zn(2+) site is built by His-53, His-55, Asp-57, His-58, His-110, Asp-127, and His-165.

Belongs to the metallo-beta-lactamase superfamily. Glyoxalase II family. As to quaternary structure, monomer. Requires Zn(2+) as cofactor.

The catalysed reaction is an S-(2-hydroxyacyl)glutathione + H2O = a 2-hydroxy carboxylate + glutathione + H(+). The protein operates within secondary metabolite metabolism; methylglyoxal degradation; (R)-lactate from methylglyoxal: step 2/2. Thiolesterase that catalyzes the hydrolysis of S-D-lactoyl-glutathione to form glutathione and D-lactic acid. This chain is Hydroxyacylglutathione hydrolase, found in Salmonella gallinarum (strain 287/91 / NCTC 13346).